A 110-amino-acid polypeptide reads, in one-letter code: Endoribonuclease SymE (110 aa).

Positions 29-74 (SRYPDYTRIPALTMKGQWLEAAGFATGTEVDVRVMNGCIVLTAQQP) constitute a SpoVT-AbrB domain.

The protein belongs to the SymE family.

It localises to the cytoplasm. Functionally, involved in the degradation and recycling of damaged RNA. It is itself a target for degradation by the ATP-dependent protease Lon. The protein is Endoribonuclease SymE of Salmonella heidelberg (strain SL476).